The primary structure comprises 274 residues: MQQLQNVIESAFERRADITPANVDTVTREAVNQVISLLDSGALRVAEKIDGQWVTHQWLKKAVLLSFRINDNQVIDGAESRYFDKVPMKFADYDEARFQKEGFRVVPPAAVRQGAFIARNTVLMPSYVNIGAFVDEGTMVDTWATVGSCAQIGKNVHLSGGVGIGGVLEPLQANPTIIEDNCFIGARSEVVEGVIVEEGSVISMGVYIGQSTRIYDRETGEIHYGRVPAGSVVVSGNLPSKDGKYSLYCAVIVKKVDAKTRGKVGINELLRTID.

Substrate-binding residues include Arg-104 and Asp-141.

Belongs to the transferase hexapeptide repeat family. As to quaternary structure, homotrimer.

It is found in the cytoplasm. The catalysed reaction is (S)-2,3,4,5-tetrahydrodipicolinate + succinyl-CoA + H2O = (S)-2-succinylamino-6-oxoheptanedioate + CoA. Its pathway is amino-acid biosynthesis; L-lysine biosynthesis via DAP pathway; LL-2,6-diaminopimelate from (S)-tetrahydrodipicolinate (succinylase route): step 1/3. This Citrobacter koseri (strain ATCC BAA-895 / CDC 4225-83 / SGSC4696) protein is 2,3,4,5-tetrahydropyridine-2,6-dicarboxylate N-succinyltransferase.